The sequence spans 146 residues: Phage-like element PBSX protein XkdJ (146 aa).

The protein to B.subtilis YqbJ.

In Bacillus subtilis (strain 168), this protein is Phage-like element PBSX protein XkdJ (xkdJ).